The sequence spans 450 residues: Sorting nexin-4 (450 aa).

An N-acetylmethionine modification is found at methionine 1. A disordered region spans residues 1-46 (MEQAPPDPERQLQPAPLEPLGSPDAVLGAAVGKETEGAGEESSGVD). A Phosphoserine modification is found at serine 22. A PX domain is found at 61-187 (SVSEAEKRTG…YLFLTQEGNW (127 aa)). Positions 106, 108, 132, and 154 each coordinate a 1,2-diacyl-sn-glycero-3-phospho-(1D-myo-inositol-3-phosphate).

Belongs to the sorting nexin family. Heterodimer; heterodimerizes with SNX7 or SNX30. Interacts with WWC1/KIBRA. Identified in a complex with WWC1/KIBRA and dynein components DYNLL1 and DYNC1I2. Interacts with BIN1.

Its subcellular location is the early endosome. It localises to the early endosome membrane. In terms of biological role, involved in the regulation of endocytosis and in several stages of intracellular trafficking. Plays a role in recycling endocytosed transferrin receptor and prevent its degradation. Involved in autophagosome assembly by regulating trafficking and recycling of phospholipid scramblase ATG9A. In Pongo abelii (Sumatran orangutan), this protein is Sorting nexin-4.